Reading from the N-terminus, the 195-residue chain is ATP-dependent Clp protease proteolytic subunit (195 aa).

The active-site Nucleophile is the serine 99. Histidine 124 is a catalytic residue.

This sequence belongs to the peptidase S14 family. In terms of assembly, fourteen ClpP subunits assemble into 2 heptameric rings which stack back to back to give a disk-like structure with a central cavity, resembling the structure of eukaryotic proteasomes.

Its subcellular location is the cytoplasm. It carries out the reaction Hydrolysis of proteins to small peptides in the presence of ATP and magnesium. alpha-casein is the usual test substrate. In the absence of ATP, only oligopeptides shorter than five residues are hydrolyzed (such as succinyl-Leu-Tyr-|-NHMec, and Leu-Tyr-Leu-|-Tyr-Trp, in which cleavage of the -Tyr-|-Leu- and -Tyr-|-Trp bonds also occurs).. Its function is as follows. Cleaves peptides in various proteins in a process that requires ATP hydrolysis. Has a chymotrypsin-like activity. Plays a major role in the degradation of misfolded proteins. The protein is ATP-dependent Clp protease proteolytic subunit of Coxiella burnetii (strain RSA 331 / Henzerling II).